Here is a 363-residue protein sequence, read N- to C-terminus: Peptide-N(4)-(N-acetyl-beta-glucosaminyl)asparagine amidase (363 aa).

Cys-129, Cys-132, Cys-165, and Cys-168 together coordinate Zn(2+). The Nucleophile role is filled by Cys-191. Active-site residues include His-218 and Asp-235. Glu-238 is a substrate binding site. The segment at 325–363 (RGKTQETKSESVSAASKSSNRGRESGSADWKAQRGEDGK) is disordered. The span at 334–343 (ESVSAASKSS) shows a compositional bias: low complexity. Positions 345 to 363 (RGRESGSADWKAQRGEDGK) are enriched in basic and acidic residues.

The protein belongs to the transglutaminase-like superfamily. PNGase family. In terms of assembly, interacts with RAD23 subunit of 26S proteasome. It depends on Zn(2+) as a cofactor.

The protein resides in the cytoplasm. It is found in the nucleus. It carries out the reaction Hydrolysis of an N(4)-(acetyl-beta-D-glucosaminyl)asparagine residue in which the glucosamine residue may be further glycosylated, to yield a (substituted) N-acetyl-beta-D-glucosaminylamine and a peptide containing an aspartate residue.. With respect to regulation, inhibited by Z-VAD-fmk, a well-known caspase inhibitor. Also inhibited by Man9GlcNAc2-iodoacetoamide. Both molecules inhibit enzyme activity through covalent binding of the carbohydrate to the single Cys-191 residue. Its function is as follows. Specifically deglycosylates the denatured form of N-linked glycoproteins in the cytoplasm and assists their proteasome-mediated degradation. Cleaves the beta-aspartyl-glucosamine (GlcNAc) of the glycan and the amide side chain of Asn, converting Asn to Asp. Prefers proteins containing high-mannose over those bearing complex type oligosaccharides. Can recognize misfolded proteins in the endoplasmic reticulum that are exported to the cytosol to be destroyed and deglycosylate them, while it has no activity toward native proteins. Deglycosylation is a prerequisite for subsequent proteasome-mediated degradation of some, but not all, misfolded glycoproteins. Involved in the formation of free oligosaccharide in cytosol. This chain is Peptide-N(4)-(N-acetyl-beta-glucosaminyl)asparagine amidase (PNG1), found in Saccharomyces cerevisiae (strain ATCC 204508 / S288c) (Baker's yeast).